A 295-amino-acid polypeptide reads, in one-letter code: MDIITGSMTALITPFKNGKVDLQKYESLIKRQIAQGINAVSPVGTTGESATLSHKEHKECIEVAVATCKNSGVKVLAGAGSNATHEACDIAKFAQEVGADGILSIAPYYNKPTQEGLYQHYKAIANSVELPLMLYNVPGRTGVDLLPETAIRLFDDVKNIYGIKEATGSLERATSLMSARKDFVVVSGDDSVDFPMLASGARGIISVTSNLLPNLKSKLVSSVLEGDYKTSLSIHNDLYELNKTLFCESNPIPIKAAMYLSGLLDSLEFRLPLTNPSAETMQKLEKILIKYEVIK.

Pyruvate is bound at residue threonine 46. The active-site Proton donor/acceptor is the tyrosine 135. Lysine 164 serves as the catalytic Schiff-base intermediate with substrate. Position 205 (isoleucine 205) interacts with pyruvate.

It belongs to the DapA family. As to quaternary structure, homotetramer; dimer of dimers.

It is found in the cytoplasm. It carries out the reaction L-aspartate 4-semialdehyde + pyruvate = (2S,4S)-4-hydroxy-2,3,4,5-tetrahydrodipicolinate + H2O + H(+). It participates in amino-acid biosynthesis; L-lysine biosynthesis via DAP pathway; (S)-tetrahydrodipicolinate from L-aspartate: step 3/4. In terms of biological role, catalyzes the condensation of (S)-aspartate-beta-semialdehyde [(S)-ASA] and pyruvate to 4-hydroxy-tetrahydrodipicolinate (HTPA). This Aliarcobacter butzleri (strain RM4018) (Arcobacter butzleri) protein is 4-hydroxy-tetrahydrodipicolinate synthase.